Consider the following 331-residue polypeptide: MTIKVGINGFGRIGRIVFRAAQKRSDIEIVAINDLLDADYMAYMLKYDSTHGRFDGTVEVKDGHLIVNGKKIRVTAERDPANLKWDEVGVDVVAEATGLFLTDETARKHITAGAKKVVMTGPSKDNTPMFVKGANFDKYAGQDIVSNASCTTNCLAPLAKVINDNFGIIEGLMTTVHATTATQKTVDGPSHKDWRGGRGASQNIIPSSTGAAKAVGKVLPELNGKLTGMAFRVPTPNVSVVDLTVRLEKAATYEQIKAAVKAAAEGEMKGVLGYTEDDVVSTDFNGEVCTSVFDAKAGIALNDNFVKLVSWYDNETGYSNKVLDLIAHISK.

Residues 12–13 (RI), Asp-34, Arg-78, and Thr-120 each bind NAD(+). Residues Lys-132 and Lys-138 each carry the N6-acetyllysine modification. D-glyceraldehyde 3-phosphate contacts are provided by residues 149-151 (SCT) and Thr-180. The active-site Nucleophile is the Cys-150. Lys-192 is modified (N6-acetyllysine). D-glyceraldehyde 3-phosphate-binding positions include 209–210 (TG) and Arg-232. Lys-249 carries the N6-acetyllysine modification. Asn-314 lines the NAD(+) pocket.

It belongs to the glyceraldehyde-3-phosphate dehydrogenase family. In terms of assembly, homotetramer.

Its subcellular location is the cytoplasm. It catalyses the reaction D-glyceraldehyde 3-phosphate + phosphate + NAD(+) = (2R)-3-phospho-glyceroyl phosphate + NADH + H(+). It participates in carbohydrate degradation; glycolysis; pyruvate from D-glyceraldehyde 3-phosphate: step 1/5. Functionally, catalyzes the oxidative phosphorylation of glyceraldehyde 3-phosphate (G3P) to 1,3-bisphosphoglycerate (BPG) using the cofactor NAD. The first reaction step involves the formation of a hemiacetal intermediate between G3P and a cysteine residue, and this hemiacetal intermediate is then oxidized to a thioester, with concomitant reduction of NAD to NADH. The reduced NADH is then exchanged with the second NAD, and the thioester is attacked by a nucleophilic inorganic phosphate to produce BPG. The protein is Glyceraldehyde-3-phosphate dehydrogenase (gapA) of Escherichia coli O6:H1 (strain CFT073 / ATCC 700928 / UPEC).